Consider the following 412-residue polypeptide: Probable tRNA sulfurtransferase (412 aa).

The interval methionine 1–glutamate 22 is disordered. Positions proline 82–threonine 190 constitute a THUMP domain. ATP is bound by residues leucine 208–methionine 209, lysine 292, glycine 314, and glutamine 323.

This sequence belongs to the ThiI family.

The protein resides in the cytoplasm. The catalysed reaction is [ThiI sulfur-carrier protein]-S-sulfanyl-L-cysteine + a uridine in tRNA + 2 reduced [2Fe-2S]-[ferredoxin] + ATP + H(+) = [ThiI sulfur-carrier protein]-L-cysteine + a 4-thiouridine in tRNA + 2 oxidized [2Fe-2S]-[ferredoxin] + AMP + diphosphate. It catalyses the reaction [ThiS sulfur-carrier protein]-C-terminal Gly-Gly-AMP + S-sulfanyl-L-cysteinyl-[cysteine desulfurase] + AH2 = [ThiS sulfur-carrier protein]-C-terminal-Gly-aminoethanethioate + L-cysteinyl-[cysteine desulfurase] + A + AMP + 2 H(+). It functions in the pathway cofactor biosynthesis; thiamine diphosphate biosynthesis. Its function is as follows. Catalyzes the ATP-dependent transfer of a sulfur to tRNA to produce 4-thiouridine in position 8 of tRNAs, which functions as a near-UV photosensor. Also catalyzes the transfer of sulfur to the sulfur carrier protein ThiS, forming ThiS-thiocarboxylate. This is a step in the synthesis of thiazole, in the thiamine biosynthesis pathway. The sulfur is donated as persulfide by IscS. This is Probable tRNA sulfurtransferase from Methanosarcina acetivorans (strain ATCC 35395 / DSM 2834 / JCM 12185 / C2A).